We begin with the raw amino-acid sequence, 111 residues long: Nucleoid-associated protein TTE0040 (111 aa).

The protein belongs to the YbaB/EbfC family. Homodimer.

It is found in the cytoplasm. The protein resides in the nucleoid. In terms of biological role, binds to DNA and alters its conformation. May be involved in regulation of gene expression, nucleoid organization and DNA protection. The polypeptide is Nucleoid-associated protein TTE0040 (Caldanaerobacter subterraneus subsp. tengcongensis (strain DSM 15242 / JCM 11007 / NBRC 100824 / MB4) (Thermoanaerobacter tengcongensis)).